The chain runs to 593 residues: UvrABC system protein C (593 aa).

The GIY-YIG domain occupies 17 to 94; it reads MEPGCYLMKD…IKQYQPRYNI (78 aa). A UVR domain is found at 199-234; the sequence is KTILKSLEERMLTASESLDFERAKEYRDLIQHIQNL.

It belongs to the UvrC family. In terms of assembly, interacts with UvrB in an incision complex.

It localises to the cytoplasm. In terms of biological role, the UvrABC repair system catalyzes the recognition and processing of DNA lesions. UvrC both incises the 5' and 3' sides of the lesion. The N-terminal half is responsible for the 3' incision and the C-terminal half is responsible for the 5' incision. The chain is UvrABC system protein C from Staphylococcus aureus (strain USA300).